A 293-amino-acid chain; its full sequence is Ribosomal protein L11 methyltransferase (293 aa).

T145, G166, D188, and N230 together coordinate S-adenosyl-L-methionine.

It belongs to the methyltransferase superfamily. PrmA family.

The protein resides in the cytoplasm. The enzyme catalyses L-lysyl-[protein] + 3 S-adenosyl-L-methionine = N(6),N(6),N(6)-trimethyl-L-lysyl-[protein] + 3 S-adenosyl-L-homocysteine + 3 H(+). In terms of biological role, methylates ribosomal protein L11. The chain is Ribosomal protein L11 methyltransferase from Escherichia coli O139:H28 (strain E24377A / ETEC).